Reading from the N-terminus, the 208-residue chain is UPF0637 protein Bcer98_2662 (208 aa).

This sequence belongs to the UPF0637 family.

This is UPF0637 protein Bcer98_2662 from Bacillus cytotoxicus (strain DSM 22905 / CIP 110041 / 391-98 / NVH 391-98).